We begin with the raw amino-acid sequence, 435 residues long: ATP-dependent RNA helicase DBP8 (435 aa).

A Q motif motif is present at residues 4-32; that stretch reads SEFKSLGCSKWLVEALNAMKIVQPTAIQK. In terms of domain architecture, Helicase ATP-binding spans 35–211; sequence IPEILKGRDC…DAPQTEGKPP (177 aa). An ATP-binding site is contributed by 48-55; that stretch reads ANTGSGKT. The short motif at 157 to 160 is the DEAD box element; sequence DEAD. The Helicase C-terminal domain maps to 244-391; that stretch reads YLYQILTSEK…FTDVGDTAVI (148 aa). Residues 409-429 show a composition bias toward basic and acidic residues; the sequence is MDKEGFGERRKLQKRKNESKE. The segment at 409–435 is disordered; that stretch reads MDKEGFGERRKLQKRKNESKEKTHRRT.

The protein belongs to the DEAD box helicase family. DDX49/DBP8 subfamily.

The protein localises to the nucleus. It is found in the nucleolus. The enzyme catalyses ATP + H2O = ADP + phosphate + H(+). ATP-binding RNA helicase involved in 40S ribosomal subunit biogenesis and is required for the normal formation of 18S rRNAs through pre-rRNA processing at A0, A1 and A2 sites. Required for vegetative growth. This chain is ATP-dependent RNA helicase DBP8 (DBP8), found in Kluyveromyces lactis (strain ATCC 8585 / CBS 2359 / DSM 70799 / NBRC 1267 / NRRL Y-1140 / WM37) (Yeast).